A 480-amino-acid chain; its full sequence is Cobyric acid synthase (480 aa).

Positions 249 to 436 (KLKVVVPVLT…LHGFLDSEAA (188 aa)) constitute a GATase cobBQ-type domain. Cys-330 serves as the catalytic Nucleophile. His-428 is an active-site residue.

The protein belongs to the CobB/CobQ family. CobQ subfamily.

The protein operates within cofactor biosynthesis; adenosylcobalamin biosynthesis. Functionally, catalyzes amidations at positions B, D, E, and G on adenosylcobyrinic A,C-diamide. NH(2) groups are provided by glutamine, and one molecule of ATP is hydrogenolyzed for each amidation. The polypeptide is Cobyric acid synthase (Vibrio vulnificus (strain YJ016)).